Reading from the N-terminus, the 220-residue chain is PRA1 family protein B4 (220 aa).

The disordered stretch occupies residues 1–27 (MASSAPPVLPISNPQTVPSAAPSSVES). The span at 12–27 (SNPQTVPSAAPSSVES) shows a compositional bias: polar residues. 5 helical membrane passes run 83-103 (YSYF…FSLV), 105-125 (HPFS…LYLF), 146-166 (GCLI…SVLV), 170-190 (MIGV…DLFL), and 196-216 (AATG…PAVI).

It belongs to the PRA1 family. In terms of assembly, interacts with PRA1B1, PRA1B2, PRA1B3, PRA1B5, PRA1B6 and PRA1E. Expressed in roots, lateral roots, lateral root caps, stomata and trichomes.

The protein resides in the endosome membrane. Functionally, may be involved in both secretory and endocytic intracellular trafficking in the endosomal/prevacuolar compartments. The chain is PRA1 family protein B4 (PRA1B4) from Arabidopsis thaliana (Mouse-ear cress).